A 139-amino-acid polypeptide reads, in one-letter code: Putative pre-16S rRNA nuclease (139 aa).

It belongs to the YqgF nuclease family.

The protein localises to the cytoplasm. Could be a nuclease involved in processing of the 5'-end of pre-16S rRNA. This chain is Putative pre-16S rRNA nuclease, found in Streptococcus agalactiae serotype Ia (strain ATCC 27591 / A909 / CDC SS700).